Here is a 369-residue protein sequence, read N- to C-terminus: Capsid protein (369 aa).

It is found in the host nucleus. The protein localises to the virion. Its function is as follows. Self-assembles to form the virion icosahedral capsid. This Avon-Heathcote Estuary associated kieseladnavirus (AHEaBV) protein is Capsid protein.